Reading from the N-terminus, the 1388-residue chain is Kinesin-like protein KIF15-A (1388 aa).

The region spanning 26-364 (AIKVFVRIRP…LQFAQRAKLI (339 aa)) is the Kinesin motor domain. 110–117 (GQTGSGKT) lines the ATP pocket. Residues 369-1383 (VVNEDTQGNV…ENLFLKESKK (1015 aa)) are a coiled coil. Residues 1127–1156 (EQEKIRPASSNSSSPVVLPETPRTPEGNPY) form a disordered region. Residues 1139–1388 (SSPVVLPETP…KESKKCEHCN (250 aa)) form a necessary for its targeting to microtubule minus ends region.

It belongs to the TRAFAC class myosin-kinesin ATPase superfamily. Kinesin family. KLP2 subfamily. Homodimer. Dimerization is required for targeting to microtubule minus ends. Found in a complex with tpx2 and microtubules. Its association with microtubules and targeting to microtubule minus ends requires tpx2. In terms of tissue distribution, strongly expressed in testis and weakly in lung (at protein level).

It is found in the cytoplasm. Its subcellular location is the cytoskeleton. The protein resides in the microtubule organizing center. The protein localises to the centrosome. It localises to the spindle. It is found in the spindle pole. In terms of biological role, plus-end directed kinesin-like motor enzyme involved in mitotic spindle assembly. Required for centrosome separation and maintenance of spindle bipolarity during mitosis. The polypeptide is Kinesin-like protein KIF15-A (kif15-a) (Xenopus laevis (African clawed frog)).